Consider the following 468-residue polypeptide: Ribulose bisphosphate carboxylase large chain (468 aa).

Lysine 7 is subject to N6,N6,N6-trimethyllysine. Residues asparagine 116 and threonine 166 each contribute to the substrate site. Residue lysine 168 is the Proton acceptor of the active site. A substrate-binding site is contributed by lysine 170. Positions 194, 196, and 197 each coordinate Mg(2+). Residue lysine 194 is modified to N6-carboxylysine. The active-site Proton acceptor is histidine 287. 3 residues coordinate substrate: arginine 288, histidine 320, and serine 372.

The protein belongs to the RuBisCO large chain family. Type I subfamily. Heterohexadecamer of 8 large chains and 8 small chains; disulfide-linked. The disulfide link is formed within the large subunit homodimers. The cofactor is Mg(2+). Post-translationally, the disulfide bond which can form in the large chain dimeric partners within the hexadecamer appears to be associated with oxidative stress and protein turnover.

It localises to the plastid. It is found in the chloroplast. The catalysed reaction is 2 (2R)-3-phosphoglycerate + 2 H(+) = D-ribulose 1,5-bisphosphate + CO2 + H2O. The enzyme catalyses D-ribulose 1,5-bisphosphate + O2 = 2-phosphoglycolate + (2R)-3-phosphoglycerate + 2 H(+). Functionally, ruBisCO catalyzes two reactions: the carboxylation of D-ribulose 1,5-bisphosphate, the primary event in carbon dioxide fixation, as well as the oxidative fragmentation of the pentose substrate in the photorespiration process. Both reactions occur simultaneously and in competition at the same active site. This is Ribulose bisphosphate carboxylase large chain from Cornus alternifolia (Pagoda dogwood).